Reading from the N-terminus, the 1276-residue chain is Receptor-type guanylate cyclase gcy-28 (1276 aa).

The first 18 residues, 1-18 (MLRWLTLLSCILLTALHG), serve as a signal peptide directing secretion. At 19-515 (NIVEDVGAAQ…KSKCPGYPLH (497 aa)) the chain is on the extracellular side. 8 N-linked (GlcNAc...) asparagine glycosylation sites follow: N87, N196, N338, N384, N387, N414, N428, and N444. The chain crosses the membrane as a helical span at residues 516 to 536 (VYLLMGSFLLILVLVGLFIFF). Topologically, residues 537–1276 (WRRYKLEQEL…EIPDFGEEFA (740 aa)) are cytoplasmic. Disordered stretches follow at residues 562-601 (ESQK…NSDK) and 635-709 (IFTR…KKSL). Basic residues predominate over residues 567-577 (NEKKKAKKRKN). Polar residues-rich tracts occupy residues 590–599 (RSTSRSSVNS) and 642–660 (TPPS…SLQK). In terms of domain architecture, Protein kinase spans 717–1013 (SFGMVSFKSG…SSVRKAVRSL (297 aa)). ATP-binding positions include 723–731 (FKSGSGGSV) and K756. Residues 1017–1063 (NETSNLVDNLLKRMEQYANNLEGLVEERTQEYLAEKKKVEELLHQLL) adopt a coiled-coil conformation. One can recognise a Guanylate cyclase domain in the interval 1086–1215 (TIYFSDIVGF…DTVNTSSRME (130 aa)). Positions 1091, 1092, and 1135 each coordinate Mg(2+).

Belongs to the adenylyl cyclase class-4/guanylyl cyclase family. As to expression, expressed in head neurons, ventral cord and tail neurons, body wall muscle, hypodermis, somatic gonad and intestine. Isoform d is expressed specifically in AIA interneurons.

It is found in the cell membrane. It localises to the cell projection. The protein localises to the dendrite. The protein resides in the axon. Its subcellular location is the perikaryon. It carries out the reaction GTP = 3',5'-cyclic GMP + diphosphate. Guanylate cyclase involved in the production of the second messenger cGMP. Regulates olfactory perception in AWC sensory neurons although may not be involved in the primary sensory transduction steps. In terms of biological role, isoforms c: Regulates sensory integration of conflicting sensory cues in AIA interneurons. Its function is as follows. Regulates sensory integration of conflicting sensory cues in AIA interneurons. The protein is Receptor-type guanylate cyclase gcy-28 of Caenorhabditis elegans.